Here is a 357-residue protein sequence, read N- to C-terminus: Chorismate synthase (357 aa).

The NADP(+) site is built by R48 and R54. Residues 125–127 (RSS), 243–244 (NA), G283, 298–302 (KPTSS), and R324 contribute to the FMN site.

It belongs to the chorismate synthase family. Homotetramer. It depends on FMNH2 as a cofactor.

The enzyme catalyses 5-O-(1-carboxyvinyl)-3-phosphoshikimate = chorismate + phosphate. It functions in the pathway metabolic intermediate biosynthesis; chorismate biosynthesis; chorismate from D-erythrose 4-phosphate and phosphoenolpyruvate: step 7/7. In terms of biological role, catalyzes the anti-1,4-elimination of the C-3 phosphate and the C-6 proR hydrogen from 5-enolpyruvylshikimate-3-phosphate (EPSP) to yield chorismate, which is the branch point compound that serves as the starting substrate for the three terminal pathways of aromatic amino acid biosynthesis. This reaction introduces a second double bond into the aromatic ring system. The protein is Chorismate synthase of Pasteurella multocida (strain Pm70).